The sequence spans 151 residues: Proline-rich acidic protein 1 (151 aa).

A signal peptide spans 1–20 (MRRLLLVTSLVVVLLWEAGA). Residues 71 to 151 (LTTEEKPRGQ…EDQDHIYHPQ (81 aa)) form a disordered region.

In terms of assembly, interacts with isoform 1 and isoform 3 of MAD1L1. Interacts with MTTP. As to expression, highly expressed in the intestinal epithelial cells (at protein level). Abundantly expressed in the epithelial cells of the liver, kidney and cervix. Significantly down-regulated in hepatocellular carcinoma and right colon adenocarcinoma compared with the respective adjacent normal tissues. Expressed in epididymis (at protein level).

It localises to the secreted. The protein localises to the endoplasmic reticulum. In terms of biological role, lipid-binding protein which promotes lipid absorption by facilitating MTTP-mediated lipid transfer (mainly triglycerides and phospholipids) and MTTP-mediated apoB lipoprotein assembly and secretion. Protects the gastrointestinal epithelium from irradiation-induced apoptosis. May play an important role in maintaining normal growth homeostasis in epithelial cells. Involved in p53/TP53-dependent cell survival after DNA damage. May down-regulate the expression of MAD1L1 and exert a suppressive role in mitotic spindle assembly checkpoint in hepatocellular carcinomas. The sequence is that of Proline-rich acidic protein 1 (PRAP1) from Homo sapiens (Human).